The following is a 949-amino-acid chain: Leucine--tRNA ligase (949 aa).

Residues proline 68–histidine 79 carry the 'HIGH' region motif. The tract at residues valine 540–glycine 562 is disordered. Residues lysine 722–serine 726 carry the 'KMSKS' region motif. Lysine 725 contributes to the ATP binding site.

It belongs to the class-I aminoacyl-tRNA synthetase family.

Its subcellular location is the cytoplasm. The enzyme catalyses tRNA(Leu) + L-leucine + ATP = L-leucyl-tRNA(Leu) + AMP + diphosphate. This chain is Leucine--tRNA ligase, found in Mycolicibacterium gilvum (strain PYR-GCK) (Mycobacterium gilvum (strain PYR-GCK)).